We begin with the raw amino-acid sequence, 318 residues long: Methionyl-tRNA formyltransferase (318 aa).

Residue 112–115 (SLLP) participates in (6S)-5,6,7,8-tetrahydrofolate binding.

It belongs to the Fmt family.

The enzyme catalyses L-methionyl-tRNA(fMet) + (6R)-10-formyltetrahydrofolate = N-formyl-L-methionyl-tRNA(fMet) + (6S)-5,6,7,8-tetrahydrofolate + H(+). In terms of biological role, attaches a formyl group to the free amino group of methionyl-tRNA(fMet). The formyl group appears to play a dual role in the initiator identity of N-formylmethionyl-tRNA by promoting its recognition by IF2 and preventing the misappropriation of this tRNA by the elongation apparatus. This Mycobacterium leprae (strain Br4923) protein is Methionyl-tRNA formyltransferase.